We begin with the raw amino-acid sequence, 432 residues long: Adenylosuccinate synthetase (432 aa).

Residues 12-18 (GDEGKGK) and 40-42 (GHT) contribute to the GTP site. The active-site Proton acceptor is Asp-13. 2 residues coordinate Mg(2+): Asp-13 and Gly-40. IMP contacts are provided by residues 13–16 (DEGK), 38–41 (NAGH), Thr-132, Arg-146, Gln-226, Thr-241, and Arg-305. The active-site Proton donor is the His-41. 301-307 (TVTGRKR) is a binding site for substrate. Residues Arg-307, 333–335 (KLD), and 415–417 (STS) each bind GTP.

It belongs to the adenylosuccinate synthetase family. Homodimer. Mg(2+) serves as cofactor.

The protein localises to the cytoplasm. It carries out the reaction IMP + L-aspartate + GTP = N(6)-(1,2-dicarboxyethyl)-AMP + GDP + phosphate + 2 H(+). The protein operates within purine metabolism; AMP biosynthesis via de novo pathway; AMP from IMP: step 1/2. Its function is as follows. Plays an important role in the de novo pathway of purine nucleotide biosynthesis. Catalyzes the first committed step in the biosynthesis of AMP from IMP. This Agrobacterium fabrum (strain C58 / ATCC 33970) (Agrobacterium tumefaciens (strain C58)) protein is Adenylosuccinate synthetase.